Reading from the N-terminus, the 136-residue chain is Probable 5-hydroxyisourate hydrolase ZK697.8 (136 aa).

Positions 1–19 (MIKFLLFLAIAAATVISNA) are cleaved as a signal peptide. Substrate is bound by residues histidine 31, arginine 69, and tyrosine 133.

This sequence belongs to the transthyretin family. 5-hydroxyisourate hydrolase subfamily. As to quaternary structure, homotetramer.

The catalysed reaction is 5-hydroxyisourate + H2O = 5-hydroxy-2-oxo-4-ureido-2,5-dihydro-1H-imidazole-5-carboxylate + H(+). Functionally, catalyzes the hydrolysis of 5-hydroxyisourate (HIU) to 2-oxo-4-hydroxy-4-carboxy-5-ureidoimidazoline (OHCU). This chain is Probable 5-hydroxyisourate hydrolase ZK697.8, found in Caenorhabditis elegans.